The sequence spans 345 residues: Acetylserotonin O-methyltransferase (345 aa).

Residues Tyr-147, Trp-164, Asp-210, 235–237 (GDF), and Arg-252 each bind S-adenosyl-L-methionine. The active-site Proton donor/acceptor is His-255. Residues Asp-256, Asn-302, and Gln-306 each contribute to the substrate site.

It belongs to the class I-like SAM-binding methyltransferase superfamily. Cation-independent O-methyltransferase family. As to quaternary structure, homodimer. In terms of tissue distribution, expressed in the pineal gland (at protein level). In the retina, very low expression is found at the mRNA level, and not at the protein level.

The enzyme catalyses N-acetylserotonin + S-adenosyl-L-methionine = melatonin + S-adenosyl-L-homocysteine + H(+). It participates in aromatic compound metabolism; melatonin biosynthesis; melatonin from serotonin: step 1/2. In terms of biological role, catalyzes the transfer of a methyl group onto N-acetylserotonin, producing melatonin (N-acetyl-5-methoxytryptamine). Does not show Acetylserotonin O-methyltransferase activity. The chain is Acetylserotonin O-methyltransferase (ASMT) from Homo sapiens (Human).